Here is a 530-residue protein sequence, read N- to C-terminus: Serendipity locus protein alpha (530 aa).

As to expression, transient expression in blastoderm from nuclear cycle 11 to the onset of gastrulation.

The protein resides in the cytoplasm. Its subcellular location is the cell membrane. Its function is as follows. Required for the cellularization of the syncytial blastoderm embryo. Involved in the localization of the actin filaments just prior to and during plasma membrane invagination. Sry-alpha together with nullo and bnk may provide auxiliary functions, by acting both to stabilize a large and dynamic microfilament structure and regulate its functions. The chain is Serendipity locus protein alpha (Sry-alpha) from Drosophila melanogaster (Fruit fly).